The primary structure comprises 484 residues: Monocarboxylate transporter 2 (484 aa).

Residues 1 to 16 (MPAPTAVPPPHPLPPD) lie on the Cytoplasmic side of the membrane. A helical membrane pass occupies residues 17-37 (GGWGWVVVGASFISIGFSYAF). The Extracellular segment spans residues 38–60 (PKSVTVFFKDIQEIFRAGHSKVA). A helical transmembrane segment spans residues 61-81 (WISSIMLAVMYAGGPISSVLV). The Cytoplasmic segment spans residues 82–87 (NKYGSR). Residues 88 to 108 (PVVVIGGLLCCTGMILASFST) traverse the membrane as a helical segment. Topologically, residues 109 to 116 (SMIQLYLT) are extracellular. The chain crosses the membrane as a helical span at residues 117 to 137 (IGFISGLGLAFNLQPALTILG). The Cytoplasmic segment spans residues 138 to 144 (KYFYRRR). The chain crosses the membrane as a helical span at residues 145–165 (PLASGLAMTGSPVFLSSLAPF). Topologically, residues 166-174 (NQYLFNSYG) are extracellular. The helical transmembrane segment at 175–195 (LKGSFLILGGIFLHSCVAGSL) threads the bilayer. At 196 to 245 (MRPVGTSQQSPKSKSKVSSRHDSSTKKAPKLTLAQRINMFLDFSLFKHRG) the chain is on the cytoplasmic side. Residues 198–223 (PVGTSQQSPKSKSKVSSRHDSSTKKA) are disordered. Residues 246 to 266 (FLIYLSGNVIMFLGFFAPVIF) form a helical membrane-spanning segment. At 267 to 281 (LSPYAKNRGVDDYKA) the chain is on the extracellular side. The chain crosses the membrane as a helical span at residues 282–302 (AYLLSVMAFVDMFSRPCGGLI). Over 303–311 (ANTRLVRPR) the chain is Cytoplasmic. Residues 312 to 332 (IQYFFSLAIVFTGVCHLLCPL) traverse the membrane as a helical segment. Residues 333–337 (AESYT) lie on the Extracellular side of the membrane. A helical transmembrane segment spans residues 338–358 (ALVVYAIFFGYGFGSVSSILF). The Cytoplasmic portion of the chain corresponds to 359 to 372 (ETLMDLVGPARFSS). A helical transmembrane segment spans residues 373–393 (AVGLVTIVECCPVLLGPPLAG). The Extracellular portion of the chain corresponds to 394 to 405 (KLVDETGEHKYL). Residues 406–426 (FVASGAIVVLAGIWLFIGNAI) form a helical membrane-spanning segment. Over 427–484 (NYRLLAKERKREKARKKKSPNRHSKELESLSKSNQDDVAVRVPQAHRSPSDKERESNI) the chain is Cytoplasmic. A disordered region spans residues 437 to 484 (REKARKKKSPNRHSKELESLSKSNQDDVAVRVPQAHRSPSDKERESNI). A compositionally biased stretch (basic residues) spans 438-448 (EKARKKKSPNR). Composition is skewed to basic and acidic residues over residues 449-465 (HSKE…DDVA) and 474-484 (SPSDKERESNI).

The protein belongs to the major facilitator superfamily. Monocarboxylate porter (TC 2.A.1.13) family. As to quaternary structure, homodimer. Interacts with GRID2IP. Interacts with EMB; interaction mediates SLC16A7 targeting to the plasma membrane. Interacts with isoform 2 of BSG.

The protein localises to the cell membrane. It is found in the basolateral cell membrane. The protein resides in the cytoplasm. The enzyme catalyses 3-methyl-2-oxobutanoate(out) + H(+)(out) = 3-methyl-2-oxobutanoate(in) + H(+)(in). It catalyses the reaction (S)-lactate(in) + H(+)(in) = (S)-lactate(out) + H(+)(out). It carries out the reaction acetoacetate(out) + H(+)(out) = acetoacetate(in) + H(+)(in). The catalysed reaction is (R)-3-hydroxybutanoate(out) + H(+)(out) = (R)-3-hydroxybutanoate(in) + H(+)(in). The enzyme catalyses 4-methyl-2-oxopentanoate(out) + H(+)(out) = 4-methyl-2-oxopentanoate(in) + H(+)(in). It catalyses the reaction pyruvate(out) + H(+)(out) = pyruvate(in) + H(+)(in). It carries out the reaction (S)-3-hydroxybutanoate(out) + H(+)(out) = (S)-3-hydroxybutanoate(in) + H(+)(in). With respect to regulation, transport activity exhibits steep dependence on substrate concentration. Substrate concentration sensitivity of SLC16A7 arises from the strong inter-subunit cooperativity of the SLC16A7 dimer during transport. Inhibited by AR-C155858. Functionally, proton-coupled monocarboxylate symporter. Catalyzes the rapid transport across the plasma membrane of monocarboxylates such as L-lactate, pyruvate and ketone bodies, acetoacetate, beta-hydroxybutyrate and acetate. Dimerization is functionally required and both subunits work cooperatively in transporting substrate. The polypeptide is Monocarboxylate transporter 2 (SLC16A7) (Meriones unguiculatus (Mongolian jird)).